The chain runs to 1136 residues: Carbamoyl phosphate synthase large chain (1136 aa).

A carboxyphosphate synthetic domain region spans residues 1 to 402 (MPKRTDIKSV…SLGKAMRSID (402 aa)). ATP is bound by residues Arg-129, Arg-169, Gly-175, Gly-176, Glu-208, Ile-210, Glu-215, Gly-241, Val-242, His-243, Gln-285, and Glu-299. One can recognise an ATP-grasp 1 domain in the interval 133–328 (KKVVKEAGAE…IAKIATKLAL (196 aa)). Gln-285, Glu-299, and Asn-301 together coordinate Mg(2+). Positions 285, 299, and 301 each coordinate Mn(2+). Residues 403 to 551 (KRHMGFSWDG…YYYSCYADET (149 aa)) are oligomerization domain. Residues 552 to 962 (ELRKREREAV…AFAKSQLASY (411 aa)) are carbamoyl phosphate synthetic domain. The ATP-grasp 2 domain occupies 681 to 881 (GEVLRQEHLN…LAKAAARIMA (201 aa)). 10 residues coordinate ATP: Arg-717, Lys-765, Leu-767, Glu-772, Gly-797, Val-798, His-799, Ser-800, Gln-840, and Glu-852. 3 residues coordinate Mg(2+): Gln-840, Glu-852, and Asn-854. Positions 840, 852, and 854 each coordinate Mn(2+). Positions 963 to 1136 (EGGLPTNGNV…KEEGEEARAQ (174 aa)) are allosteric domain. Positions 964 to 1122 (GGLPTNGNVF…QEHSRELYEL (159 aa)) constitute an MGS-like domain.

Belongs to the CarB family. Composed of two chains; the small (or glutamine) chain promotes the hydrolysis of glutamine to ammonia, which is used by the large (or ammonia) chain to synthesize carbamoyl phosphate. Tetramer of heterodimers (alpha,beta)4. The cofactor is Mg(2+). Mn(2+) is required as a cofactor.

The enzyme catalyses hydrogencarbonate + L-glutamine + 2 ATP + H2O = carbamoyl phosphate + L-glutamate + 2 ADP + phosphate + 2 H(+). It carries out the reaction hydrogencarbonate + NH4(+) + 2 ATP = carbamoyl phosphate + 2 ADP + phosphate + 2 H(+). Its pathway is amino-acid biosynthesis; L-arginine biosynthesis; carbamoyl phosphate from bicarbonate: step 1/1. The protein operates within pyrimidine metabolism; UMP biosynthesis via de novo pathway; (S)-dihydroorotate from bicarbonate: step 1/3. In terms of biological role, large subunit of the glutamine-dependent carbamoyl phosphate synthetase (CPSase). CPSase catalyzes the formation of carbamoyl phosphate from the ammonia moiety of glutamine, carbonate, and phosphate donated by ATP, constituting the first step of 2 biosynthetic pathways, one leading to arginine and/or urea and the other to pyrimidine nucleotides. The large subunit (synthetase) binds the substrates ammonia (free or transferred from glutamine from the small subunit), hydrogencarbonate and ATP and carries out an ATP-coupled ligase reaction, activating hydrogencarbonate by forming carboxy phosphate which reacts with ammonia to form carbamoyl phosphate. The polypeptide is Carbamoyl phosphate synthase large chain (Bifidobacterium animalis subsp. lactis (strain AD011)).